The primary structure comprises 505 residues: ATP synthase subunit alpha (505 aa).

Position 169 to 176 (G169 to T176) interacts with ATP.

This sequence belongs to the ATPase alpha/beta chains family. F-type ATPases have 2 components, CF(1) - the catalytic core - and CF(0) - the membrane proton channel. CF(1) has five subunits: alpha(3), beta(3), gamma(1), delta(1), epsilon(1). CF(0) has three main subunits: a(1), b(2) and c(9-12). The alpha and beta chains form an alternating ring which encloses part of the gamma chain. CF(1) is attached to CF(0) by a central stalk formed by the gamma and epsilon chains, while a peripheral stalk is formed by the delta and b chains.

It is found in the cell membrane. It carries out the reaction ATP + H2O + 4 H(+)(in) = ADP + phosphate + 5 H(+)(out). Functionally, produces ATP from ADP in the presence of a proton gradient across the membrane. The alpha chain is a regulatory subunit. In Leuconostoc mesenteroides subsp. mesenteroides (strain ATCC 8293 / DSM 20343 / BCRC 11652 / CCM 1803 / JCM 6124 / NCDO 523 / NBRC 100496 / NCIMB 8023 / NCTC 12954 / NRRL B-1118 / 37Y), this protein is ATP synthase subunit alpha.